Here is a 114-residue protein sequence, read N- to C-terminus: U17-barytoxin-Tl1d (114 aa).

A signal peptide spans 1–20 (MKTIIVFLSLLVLATKFGDA). Positions 21-74 (NEGVNQEQMKEVIQNEFREDFLNEMAPMSLLQQLEAIESTLLEKEADRNSRQKR) are excised as a propeptide. Disulfide bonds link C75–C88, C82–C93, and C87–C108.

This sequence belongs to the neurotoxin 14 (magi-1) family. 03 (ICK-30-40) subfamily. As to expression, expressed by the venom gland.

The protein localises to the secreted. Ion channel inhibitor. The protein is U17-barytoxin-Tl1d of Trittame loki (Brush-footed trapdoor spider).